A 129-amino-acid polypeptide reads, in one-letter code: Large ribosomal subunit protein bL17 (129 aa).

It belongs to the bacterial ribosomal protein bL17 family. Part of the 50S ribosomal subunit. Contacts protein L32.

This Thiobacillus denitrificans (strain ATCC 25259 / T1) protein is Large ribosomal subunit protein bL17.